The chain runs to 56 residues: MARKRQDVRPIVKLKSTAGTGFTYVTRKNRRNDPDRIVLKKYDPIIRRHTEFREER.

Belongs to the bacterial ribosomal protein bL33 family.

This is Large ribosomal subunit protein bL33 from Tropheryma whipplei (strain TW08/27) (Whipple's bacillus).